An 850-amino-acid chain; its full sequence is Bifunctional uridylyltransferase/uridylyl-removing enzyme (850 aa).

The interval 1–317 is uridylyltransferase; that stretch reads MSARPFADLR…LFPVVAPPLP (317 aa). Residues 318–673 are uridylyl-removing; sequence IDDDFQLRAG…ARLSPAGEGI (356 aa). The HD domain maps to 436–558; the sequence is VDEHILTVLR…VGDTRRLDAL (123 aa). 2 consecutive ACT domains span residues 674-755 and 783-850; these read QVMV…AVQP and VLSI…GVLG.

Belongs to the GlnD family. The cofactor is Mg(2+).

The catalysed reaction is [protein-PII]-L-tyrosine + UTP = [protein-PII]-uridylyl-L-tyrosine + diphosphate. The enzyme catalyses [protein-PII]-uridylyl-L-tyrosine + H2O = [protein-PII]-L-tyrosine + UMP + H(+). Its activity is regulated as follows. Uridylyltransferase (UTase) activity is inhibited by glutamine, while glutamine activates uridylyl-removing (UR) activity. Functionally, modifies, by uridylylation and deuridylylation, the PII regulatory proteins (GlnB and homologs), in response to the nitrogen status of the cell that GlnD senses through the glutamine level. Under low glutamine levels, catalyzes the conversion of the PII proteins and UTP to PII-UMP and PPi, while under higher glutamine levels, GlnD hydrolyzes PII-UMP to PII and UMP (deuridylylation). Thus, controls uridylylation state and activity of the PII proteins, and plays an important role in the regulation of nitrogen assimilation and metabolism. This is Bifunctional uridylyltransferase/uridylyl-removing enzyme from Thiobacillus denitrificans (strain ATCC 25259 / T1).